The chain runs to 249 residues: (S)-1-Phenylethanol dehydrogenase (249 aa).

NAD(+) is bound by residues 17–19 (NGI), Asp38, 61–63 (CDV), Asn89, and Tyr93. Ser141 contributes to the substrate binding site. Tyr154 (proton acceptor) is an active-site residue. Residues Lys158, 184–187 (PSLV), and Thr191 contribute to the NAD(+) site.

It belongs to the short-chain dehydrogenases/reductases (SDR) family. As to quaternary structure, homotetramer.

The catalysed reaction is (S)-1-phenylethanol + NAD(+) = acetophenone + NADH + H(+). Functionally, catalyzes the NAD-dependent stereospecific oxidation of (S)-1-phenylethanol to acetophenone in the degradation of ethylbenzene. The chain is (S)-1-Phenylethanol dehydrogenase (ped) from Aromatoleum aromaticum (strain DSM 19018 / LMG 30748 / EbN1) (Azoarcus sp. (strain EbN1)).